The following is a 239-amino-acid chain: Isopentenyl-diphosphate Delta-isomerase (239 aa).

Residue K43 participates in substrate binding. Mg(2+) contacts are provided by H47 and H58. The Nudix hydrolase domain occupies 56–210; sequence LLHRAFSIFL…KVKVTPWFRL (155 aa). 2 residues coordinate substrate: R77 and K81. C93 is an active-site residue. A substrate-binding site is contributed by S94. Positions 156 and 158 each coordinate Mg(2+). The active site involves E158.

Belongs to the IPP isomerase type 1 family. Mg(2+) is required as a cofactor.

The enzyme catalyses isopentenyl diphosphate = dimethylallyl diphosphate. Its pathway is isoprenoid biosynthesis; dimethylallyl diphosphate biosynthesis; dimethylallyl diphosphate from isopentenyl diphosphate: step 1/1. Its function is as follows. Catalyzes the 1,3-allylic rearrangement of the homoallylic substrate isopentenyl (IPP) to its highly electrophilic allylic isomer, dimethylallyl diphosphate (DMAPP). This Dictyostelium discoideum (Social amoeba) protein is Isopentenyl-diphosphate Delta-isomerase (ipi).